We begin with the raw amino-acid sequence, 387 residues long: Sulfate adenylyltransferase (387 aa).

Belongs to the sulfate adenylyltransferase family.

The catalysed reaction is sulfate + ATP + H(+) = adenosine 5'-phosphosulfate + diphosphate. It functions in the pathway sulfur metabolism; hydrogen sulfide biosynthesis; sulfite from sulfate: step 1/3. This chain is Sulfate adenylyltransferase (sat), found in Deinococcus radiodurans (strain ATCC 13939 / DSM 20539 / JCM 16871 / CCUG 27074 / LMG 4051 / NBRC 15346 / NCIMB 9279 / VKM B-1422 / R1).